The sequence spans 36 residues: DNA binding protein ORF8 (36 aa).

Belongs to the microviridae J protein family.

The protein localises to the virion. Its subcellular location is the host cytoplasm. Functionally, mediates ssDNA packaging into virion, it locates to the internal surface of the capsid. Additionally, plays a role in viral attachment to the host cell. The sequence is that of DNA binding protein ORF8 from Chlamydia phage 1 (Bacteriophage Chp1).